The following is a 360-amino-acid chain: Holliday junction branch migration complex subunit RuvB (360 aa).

Residues 1 to 46 (MAIKRSGNSDRPAKNPSSTPGTNAPTLLSPTPTHQEKETSEEKIRP) are disordered. The tract at residues 13–205 (AKNPSSTPGT…FGLIQRLRFY (193 aa)) is large ATPase domain (RuvB-L). Residues 15–33 (NPSSTPGTNAPTLLSPTPT) are compositionally biased toward polar residues. Over residues 34–46 (HQEKETSEEKIRP) the composition is skewed to basic and acidic residues. ATP-binding positions include Ile-44, Arg-45, Gly-86, Lys-89, Thr-90, Thr-91, 152 to 154 (EDY), Arg-195, Tyr-205, and Arg-242. Residue Thr-90 participates in Mg(2+) binding. The segment at 206-276 (EVDELTLIVL…LASEALDIYQ (71 aa)) is small ATPAse domain (RuvB-S). Residues 279–360 (KQGLDWIDRL…LTSEEQLSIF (82 aa)) are head domain (RuvB-H). DNA is bound by residues Arg-334 and Arg-339.

It belongs to the RuvB family. As to quaternary structure, homohexamer. Forms an RuvA(8)-RuvB(12)-Holliday junction (HJ) complex. HJ DNA is sandwiched between 2 RuvA tetramers; dsDNA enters through RuvA and exits via RuvB. An RuvB hexamer assembles on each DNA strand where it exits the tetramer. Each RuvB hexamer is contacted by two RuvA subunits (via domain III) on 2 adjacent RuvB subunits; this complex drives branch migration. In the full resolvosome a probable DNA-RuvA(4)-RuvB(12)-RuvC(2) complex forms which resolves the HJ.

The protein localises to the cytoplasm. It catalyses the reaction ATP + H2O = ADP + phosphate + H(+). In terms of biological role, the RuvA-RuvB-RuvC complex processes Holliday junction (HJ) DNA during genetic recombination and DNA repair, while the RuvA-RuvB complex plays an important role in the rescue of blocked DNA replication forks via replication fork reversal (RFR). RuvA specifically binds to HJ cruciform DNA, conferring on it an open structure. The RuvB hexamer acts as an ATP-dependent pump, pulling dsDNA into and through the RuvAB complex. RuvB forms 2 homohexamers on either side of HJ DNA bound by 1 or 2 RuvA tetramers; 4 subunits per hexamer contact DNA at a time. Coordinated motions by a converter formed by DNA-disengaged RuvB subunits stimulates ATP hydrolysis and nucleotide exchange. Immobilization of the converter enables RuvB to convert the ATP-contained energy into a lever motion, pulling 2 nucleotides of DNA out of the RuvA tetramer per ATP hydrolyzed, thus driving DNA branch migration. The RuvB motors rotate together with the DNA substrate, which together with the progressing nucleotide cycle form the mechanistic basis for DNA recombination by continuous HJ branch migration. Branch migration allows RuvC to scan DNA until it finds its consensus sequence, where it cleaves and resolves cruciform DNA. This is Holliday junction branch migration complex subunit RuvB from Rippkaea orientalis (strain PCC 8801 / RF-1) (Cyanothece sp. (strain PCC 8801)).